Consider the following 161-residue polypeptide: ATP synthase subunit b 1 (161 aa).

The chain crosses the membrane as a helical span at residues leucine 3–leucine 23.

This sequence belongs to the ATPase B chain family. In terms of assembly, F-type ATPases have 2 components, F(1) - the catalytic core - and F(0) - the membrane proton channel. F(1) has five subunits: alpha(3), beta(3), gamma(1), delta(1), epsilon(1). F(0) has three main subunits: a(1), b(2) and c(10-14). The alpha and beta chains form an alternating ring which encloses part of the gamma chain. F(1) is attached to F(0) by a central stalk formed by the gamma and epsilon chains, while a peripheral stalk is formed by the delta and b chains.

It is found in the cell inner membrane. Its function is as follows. F(1)F(0) ATP synthase produces ATP from ADP in the presence of a proton or sodium gradient. F-type ATPases consist of two structural domains, F(1) containing the extramembraneous catalytic core and F(0) containing the membrane proton channel, linked together by a central stalk and a peripheral stalk. During catalysis, ATP synthesis in the catalytic domain of F(1) is coupled via a rotary mechanism of the central stalk subunits to proton translocation. Functionally, component of the F(0) channel, it forms part of the peripheral stalk, linking F(1) to F(0). This is ATP synthase subunit b 1 from Rhizobium meliloti (strain 1021) (Ensifer meliloti).